The following is a 701-amino-acid chain: Cytosolic endo-beta-N-acetylglucosaminidase 2 (701 aa).

It belongs to the glycosyl hydrolase 85 family.

The protein localises to the cytoplasm. It is found in the cytosol. The enzyme catalyses an N(4)-(oligosaccharide-(1-&gt;3)-[oligosaccharide-(1-&gt;6)]-beta-D-Man-(1-&gt;4)-beta-D-GlcNAc-(1-&gt;4)-alpha-D-GlcNAc)-L-asparaginyl-[protein] + H2O = an oligosaccharide-(1-&gt;3)-[oligosaccharide-(1-&gt;6)]-beta-D-Man-(1-&gt;4)-D-GlcNAc + N(4)-(N-acetyl-beta-D-glucosaminyl)-L-asparaginyl-[protein]. Functionally, endoglycosidase that releases N-glycans from glycoproteins by cleaving the beta-1,4-glycosidic bond in the N,N'-diacetylchitobiose core. Involved in the production of high-mannose type N-glycans during plant development and fruit maturation. The sequence is that of Cytosolic endo-beta-N-acetylglucosaminidase 2 from Arabidopsis thaliana (Mouse-ear cress).